The sequence spans 345 residues: Holliday junction branch migration complex subunit RuvB (345 aa).

Residues 4 to 182 (PDRIVSAVQR…FGIPIRLEFY (179 aa)) form a large ATPase domain (RuvB-L) region. ATP is bound by residues Arg22, Gly63, Lys66, Thr67, Thr68, 129–131 (EDY), Arg172, Tyr182, and Arg219. Thr67 contributes to the Mg(2+) binding site. The segment at 183-253 (TVDELQAIVT…IADAALSRLE (71 aa)) is small ATPAse domain (RuvB-S). The segment at 256–345 (ALGLDQLDRR…QSQINLFEEE (90 aa)) is head domain (RuvB-H). Residues Arg292, Arg311, and Arg316 each contribute to the DNA site.

It belongs to the RuvB family. As to quaternary structure, homohexamer. Forms an RuvA(8)-RuvB(12)-Holliday junction (HJ) complex. HJ DNA is sandwiched between 2 RuvA tetramers; dsDNA enters through RuvA and exits via RuvB. An RuvB hexamer assembles on each DNA strand where it exits the tetramer. Each RuvB hexamer is contacted by two RuvA subunits (via domain III) on 2 adjacent RuvB subunits; this complex drives branch migration. In the full resolvosome a probable DNA-RuvA(4)-RuvB(12)-RuvC(2) complex forms which resolves the HJ.

Its subcellular location is the cytoplasm. The catalysed reaction is ATP + H2O = ADP + phosphate + H(+). Functionally, the RuvA-RuvB-RuvC complex processes Holliday junction (HJ) DNA during genetic recombination and DNA repair, while the RuvA-RuvB complex plays an important role in the rescue of blocked DNA replication forks via replication fork reversal (RFR). RuvA specifically binds to HJ cruciform DNA, conferring on it an open structure. The RuvB hexamer acts as an ATP-dependent pump, pulling dsDNA into and through the RuvAB complex. RuvB forms 2 homohexamers on either side of HJ DNA bound by 1 or 2 RuvA tetramers; 4 subunits per hexamer contact DNA at a time. Coordinated motions by a converter formed by DNA-disengaged RuvB subunits stimulates ATP hydrolysis and nucleotide exchange. Immobilization of the converter enables RuvB to convert the ATP-contained energy into a lever motion, pulling 2 nucleotides of DNA out of the RuvA tetramer per ATP hydrolyzed, thus driving DNA branch migration. The RuvB motors rotate together with the DNA substrate, which together with the progressing nucleotide cycle form the mechanistic basis for DNA recombination by continuous HJ branch migration. Branch migration allows RuvC to scan DNA until it finds its consensus sequence, where it cleaves and resolves cruciform DNA. This chain is Holliday junction branch migration complex subunit RuvB, found in Chelativorans sp. (strain BNC1).